The chain runs to 217 residues: NAD(P)H-quinone oxidoreductase subunit M, chloroplastic (217 aa).

The transit peptide at 1-21 (MVAAFSYTACTKLSLLHPSMV) directs the protein to the chloroplast. The interval 48–67 (ETETLKEEQSTEKMKKQPTP) is disordered. Positions 50-62 (ETLKEEQSTEKMK) are enriched in basic and acidic residues.

The protein belongs to the NDH complex subunit M family. Part of the chloroplast NDH complex, composed of a mixture of chloroplast and nucleus encoded subunits. Component of the NDH subcomplex A, at least composed of ndhH, ndhI, ndhJ, ndhK, ndhL, ndhM, ndhN and ndhO.

It localises to the plastid. It is found in the chloroplast thylakoid membrane. The catalysed reaction is a plastoquinone + NADH + (n+1) H(+)(in) = a plastoquinol + NAD(+) + n H(+)(out). It catalyses the reaction a plastoquinone + NADPH + (n+1) H(+)(in) = a plastoquinol + NADP(+) + n H(+)(out). Its function is as follows. NDH shuttles electrons from NAD(P)H:plastoquinone, via FMN and iron-sulfur (Fe-S) centers, to quinones in the photosynthetic chain and possibly in a chloroplast respiratory chain. The immediate electron acceptor for the enzyme in this species is believed to be plastoquinone. Couples the redox reaction to proton translocation, and thus conserves the redox energy in a proton gradient. The protein is NAD(P)H-quinone oxidoreductase subunit M, chloroplastic of Arabidopsis thaliana (Mouse-ear cress).